We begin with the raw amino-acid sequence, 68 residues long: Preprofallaxidin-5 (68 aa).

A signal peptide spans 1–22; it reads MASLKKSLFLVLFLGFVSLSIC. Positions 23-51 are excised as a propeptide; sequence EEEKREDKEDEGENEEAEENHEERSEEKR. The tract at residues 24 to 50 is disordered; that stretch reads EEKREDKEDEGENEEAEENHEERSEEK. A compositionally biased stretch (acidic residues) spans 30–42; that stretch reads KEDEGENEEAEEN. The residue at position 64 (leucine 64) is a Leucine amide. A propeptide is located at residue serine 68.

The protein belongs to the frog skin active peptide (FSAP) family. Brevinin subfamily. As to expression, expressed by the skin glands.

The protein localises to the secreted. The sequence is that of Preprofallaxidin-5 from Litoria fallax (Eastern dwarf tree frog).